A 183-amino-acid polypeptide reads, in one-letter code: Transposon gamma-delta resolvase (183 aa).

A Resolvase/invertase-type recombinase catalytic domain is found at Arg-2–Gly-137. The active-site O-(5'-phospho-DNA)-serine intermediate is Ser-10. Residues Ala-161 to Asn-180 constitute a DNA-binding region (H-T-H motif).

This sequence belongs to the site-specific recombinase resolvase family.

Functionally, this protein catalyzes the site-specific recombination of the transposon and also regulates its frequency of transposition. This Escherichia coli (strain K12) protein is Transposon gamma-delta resolvase (tnpR).